The primary structure comprises 115 residues: U3-lycotoxin-Ls1a (115 aa).

A signal peptide spans 1–20; the sequence is MKFVLLFGVFLVTLFSYSSA. The propeptide occupies 21-44; sequence EMLDDFGQADEDELLSLIEKEEAR. Disulfide bonds link Cys48/Cys63, Cys55/Cys72, Cys62/Cys87, and Cys74/Cys85.

The protein belongs to the neurotoxin 19 (CSTX) family. 01 subfamily. In terms of tissue distribution, expressed by the venom gland.

It is found in the secreted. The chain is U3-lycotoxin-Ls1a from Lycosa singoriensis (Wolf spider).